A 382-amino-acid polypeptide reads, in one-letter code: Beta-lactamase CMY-1 (382 aa).

Positions 1 to 23 (MQQRQSILWGAVATLMWAGLAHA) are cleaved as a signal peptide. The active-site Acyl-ester intermediate is the S88. Residues S88, Q144, Y174, N176, and N363 each coordinate a beta-lactam.

Belongs to the class-C beta-lactamase family.

The catalysed reaction is a beta-lactam + H2O = a substituted beta-amino acid. Inhibited by the beta-lactamase-blocking agent sulbactam. Class C beta-lactamase which confers resistance to penicillins and cephalosporins. Has benzylpenicillin- and cefalotin-hydrolyzing activities. Has weak cefuroxime, cefotaxime, cefoxitin, imipenem and oxacillin-hydrolyzing activities. In Klebsiella pneumoniae, this protein is Beta-lactamase CMY-1.